Reading from the N-terminus, the 161-residue chain is Lipoprotein signal peptidase (161 aa).

Transmembrane regions (helical) follow at residues 11-31, 44-64, 66-86, and 100-120; these read PLFW…KLWV, LWSG…FSAF, GGAG…IIFA, and GCIL…GHVI. Catalysis depends on residues aspartate 121 and aspartate 137. The chain crosses the membrane as a helical span at residues 135 to 155; it reads LADVSINIGIAALLWASFFPV.

Belongs to the peptidase A8 family.

The protein resides in the cell inner membrane. The enzyme catalyses Release of signal peptides from bacterial membrane prolipoproteins. Hydrolyzes -Xaa-Yaa-Zaa-|-(S,diacylglyceryl)Cys-, in which Xaa is hydrophobic (preferably Leu), and Yaa (Ala or Ser) and Zaa (Gly or Ala) have small, neutral side chains.. The protein operates within protein modification; lipoprotein biosynthesis (signal peptide cleavage). Its function is as follows. This protein specifically catalyzes the removal of signal peptides from prolipoproteins. The polypeptide is Lipoprotein signal peptidase (Synechocystis sp. (strain ATCC 27184 / PCC 6803 / Kazusa)).